Consider the following 237-residue polypeptide: Lectin ConGF (237 aa).

The Mn(2+) site is built by E8 and D10. Residues D10, Y12, N14, and D19 each contribute to the Ca(2+) site. N14 serves as a coordination point for a carbohydrate. D19 and H24 together coordinate Mn(2+). A carbohydrate contacts are provided by L99, Y100, D208, and R228.

Belongs to the leguminous lectin family. As to quaternary structure, homotetramer; dimer of dimers. Concanavalin A-like lectins of the Diocleinae subtribe undergo proteolytic processing referred to as circular permutation. The propeptide is split into an N-terminal and a C-terminal part, the gamma and beta chain, respectively. These are then religated in beta-gamma order to form the mature alpha chain. The beta and gamma chains can often be detected in cell extracts. Residues 1-118 of the mature chain, as displayed here, probably constitute the beta chain in the propeptide, residues 119-237 the gamma chain.

Lectin. Induces paw edema in mice. Has a weak vasorelaxant effect on rat aorta. Has anti-inflammatory and anti-nociceptive effects. This is Lectin ConGF from Canavalia grandiflora (Jackbean).